Reading from the N-terminus, the 224-residue chain is Ribonuclease T (224 aa).

The region spanning 20–194 (VVIDVETAGF…YDTERTAELF (175 aa)) is the Exonuclease domain. Mg(2+)-binding residues include Asp23, Glu25, His181, and Asp186. The Proton donor/acceptor role is filled by His181.

Belongs to the RNase T family. Homodimer. It depends on Mg(2+) as a cofactor.

Functionally, trims short 3' overhangs of a variety of RNA species, leaving a one or two nucleotide 3' overhang. Responsible for the end-turnover of tRNA: specifically removes the terminal AMP residue from uncharged tRNA (tRNA-C-C-A). Also appears to be involved in tRNA biosynthesis. In Enterobacter sp. (strain 638), this protein is Ribonuclease T.